The following is a 375-amino-acid chain: MNTSHLMASLSPAFLQGKNGTNPLDSLYNLSDGCQDSADLLAFIITTYSVETVLGVLGNLCLIFVTTRQKEKSNVTNLLIANLAFSDFLMCLICQPLTVTYTIMDYWIFGEVLCKMLTFIQCMSVTVSILSLVLVALERHQLIINPTGWKPSISQAYLGIVVIWFISCFLSLPFLANSILNDLFHYNHSKVVEFLEDKVVCFVSWSSDHHRLIYTTFLLLFQYCVPLAFILVCYMRIYQRLQRQRRAFHTHTCSSRVGQMKRINGMLMAMVTAFAVLWLPLHVFNTLEDWYQEAIPACHGNLIFLMCHLFAMASTCVNPFIYGFLNINFKKDIKALVLTCRCRPPQGEPEPLPLSTVHTDLSKGSMRMGSKSNVM.

The Extracellular portion of the chain corresponds to 1 to 39 (MNTSHLMASLSPAFLQGKNGTNPLDSLYNLSDGCQDSAD). N-linked (GlcNAc...) asparagine glycosylation is found at asparagine 2, asparagine 19, and asparagine 29. The helical transmembrane segment at 40-60 (LLAFIITTYSVETVLGVLGNL) threads the bilayer. Residues 61–78 (CLIFVTTRQKEKSNVTNL) are Cytoplasmic-facing. Residues 79-99 (LIANLAFSDFLMCLICQPLTV) form a helical membrane-spanning segment. Residues 100 to 116 (TYTIMDYWIFGEVLCKM) lie on the Extracellular side of the membrane. Cysteines 114 and 201 form a disulfide. Residues 117–137 (LTFIQCMSVTVSILSLVLVAL) traverse the membrane as a helical segment. The Cytoplasmic segment spans residues 138–155 (ERHQLIINPTGWKPSISQ). A helical transmembrane segment spans residues 156 to 176 (AYLGIVVIWFISCFLSLPFLA). Over 177–211 (NSILNDLFHYNHSKVVEFLEDKVVCFVSWSSDHHR) the chain is Extracellular. Residue asparagine 187 is glycosylated (N-linked (GlcNAc...) asparagine). A helical transmembrane segment spans residues 212 to 232 (LIYTTFLLLFQYCVPLAFILV). The Cytoplasmic segment spans residues 233 to 262 (CYMRIYQRLQRQRRAFHTHTCSSRVGQMKR). A helical transmembrane segment spans residues 263–283 (INGMLMAMVTAFAVLWLPLHV). Over 284-301 (FNTLEDWYQEAIPACHGN) the chain is Extracellular. The helical transmembrane segment at 302–322 (LIFLMCHLFAMASTCVNPFIY) threads the bilayer. Over 323–375 (GFLNINFKKDIKALVLTCRCRPPQGEPEPLPLSTVHTDLSKGSMRMGSKSNVM) the chain is Cytoplasmic. Residue cysteine 340 is the site of S-palmitoyl cysteine attachment.

It belongs to the G-protein coupled receptor 1 family. In terms of tissue distribution, detected in colon and brain.

Its subcellular location is the cell membrane. Functionally, g protein-coupled receptor for PPY/pancreatic polypeptide/PP that is negatively coupled to cAMP. Has much lower affinity for the NPY/neuropeptide Y and PYY/peptide YY. The polypeptide is Neuropeptide Y receptor type 4 (Npy4r) (Rattus norvegicus (Rat)).